An 807-amino-acid polypeptide reads, in one-letter code: Mechanosensitive cation channel TMEM63A (807 aa).

Topologically, residues 1–51 (MMDSPFLELWQSKAVSIREQLGLGDRPNDSYCYNSAKNSTVLQGVTFGGIP) are extracellular. N-linked (GlcNAc...) asparagine glycosylation occurs at N38. A helical transmembrane segment spans residues 52–74 (TVLLIDVSCFLFLILVFSIIRRR). The Cytoplasmic portion of the chain corresponds to 75–134 (FWDYGRIALVSEADSESRFQRLSSTSSSGQQDFENELGCCPWLTAIFRLHDDQILEWCGE). The chain crosses the membrane as a helical span at residues 135-167 (DAIHYLSFQRHIIFLLVVVSFLSLCVILPVNLS). Residues 168 to 191 (GDLLDKDPYSFGRTTIANLQTDND) are Extracellular-facing. A helical transmembrane segment spans residues 192–217 (LLWLHTIFAVIYLFLTVGFMRHHTQS). Residues 218–416 (IKYKEENLVR…CWKNLSIQGL (199 aa)) lie on the Cytoplasmic side of the membrane. The interval 219–414 (KYKEENLVRR…DICWKNLSIQ (196 aa)) is intracellular linker IL2; confers mechanosensitivity. Residues 417 to 444 (RWWLQWLGINFTLFLGLFFLTTPSIILS) form a helical membrane-spanning segment. The Extracellular segment spans residues 445 to 462 (TMDKFNVTKPIHALNNPI). N450 is a glycosylation site (N-linked (GlcNAc...) asparagine). A helical transmembrane segment spans residues 463–490 (ISQFFPTLLLWSFSALLPSIVYYSTLLE). Residues 491–495 (SHWTK) are Cytoplasmic-facing. Residues 496–532 (SGENQIMMTKVYIFLIFMVLILPSLGLTSLDFFFRWL) form a helical membrane-spanning segment. At 533–554 (FDKTSSEASIRLECVFLPDQGA) the chain is on the extracellular side. The helical transmembrane segment at 555–586 (FFVNYVIASAFIGNGMELLRLPGLILYTFRMI) threads the bilayer. A gating helix region spans residues 555 to 586 (FFVNYVIASAFIGNGMELLRLPGLILYTFRMI). At 587 to 606 (MAKTAADRRNVKQNQAFQYE) the chain is on the cytoplasmic side. Residues 607–624 (FGAMYAWMLCVFTVIVAY) form a helical membrane-spanning segment. Residues 625–628 (SITC) are Extracellular-facing. A helical transmembrane segment spans residues 629–651 (PIIAPFGLIYILLKHMVDRHNLY). Over 652–661 (FVYLPAKLEK) the chain is Cytoplasmic. Residues 662–689 (GIHFAAVNQALAAPILCLFWLYFFSFLR) form a helical membrane-spanning segment. The Extracellular segment spans residues 690–694 (LGMKA). Residues 695–709 (PATLFTFLVLLLTIL) form a helical membrane-spanning segment. Residues 710–807 (VCLAHTCFGC…GSVAAAPQEA (98 aa)) are Cytoplasmic-facing. The residue at position 739 (S739) is a Phosphoserine.

The protein belongs to the CSC1 (TC 1.A.17) family. In terms of assembly, monomer. Post-translationally, N-Glycosylated.

The protein localises to the lysosome membrane. It is found in the early endosome membrane. The protein resides in the cell membrane. The enzyme catalyses Ca(2+)(in) = Ca(2+)(out). Its function is as follows. Mechanosensitive cation channel with low conductance and high activation threshold. In contrast to TMEM63B, does not show phospholipid scramblase activity. Acts as a regulator of lysosomal morphology by mediating lysosomal mechanosensitivity. Important for the baby's first breath and respiration throughout life. Upon lung inflation conducts cation currents in alveolar type 1 and 2 cells triggering lamellar body exocytosis and surfactant secretion into airspace. Also acts as an osmosensitive cation channel preferentially activated by hypotonic stress. The sequence is that of Mechanosensitive cation channel TMEM63A from Homo sapiens (Human).